A 395-amino-acid chain; its full sequence is NAD(P)H-quinone oxidoreductase subunit H, chloroplastic (395 aa).

It belongs to the complex I 49 kDa subunit family. In terms of assembly, NDH is composed of at least 16 different subunits, 5 of which are encoded in the nucleus.

Its subcellular location is the plastid. It is found in the chloroplast thylakoid membrane. The catalysed reaction is a plastoquinone + NADH + (n+1) H(+)(in) = a plastoquinol + NAD(+) + n H(+)(out). It catalyses the reaction a plastoquinone + NADPH + (n+1) H(+)(in) = a plastoquinol + NADP(+) + n H(+)(out). In terms of biological role, NDH shuttles electrons from NAD(P)H:plastoquinone, via FMN and iron-sulfur (Fe-S) centers, to quinones in the photosynthetic chain and possibly in a chloroplast respiratory chain. The immediate electron acceptor for the enzyme in this species is believed to be plastoquinone. Couples the redox reaction to proton translocation, and thus conserves the redox energy in a proton gradient. This chain is NAD(P)H-quinone oxidoreductase subunit H, chloroplastic, found in Coffea arabica (Arabian coffee).